Here is a 298-residue protein sequence, read N- to C-terminus: Protoheme IX farnesyltransferase (298 aa).

The next 9 helical transmembrane spans lie at 26–46 (VVSLIVFTAVIGMFLSVPGAV), 52–72 (IFGTVGISLVAGAAAALNCLV), 93–113 (VSVPETLFFLVLIGGFGLFML), 120–140 (LTMWLTLGTFVGYAIIYTVIL), 148–168 (IVIGGASGAMPPVLGWAAVTG), 174–194 (ALLLFLIIFAWTPPHFWALAL), 219–239 (LHVLLYTIILCVVTVLPYLTQ), 241–261 (SGLIYLGSVLILDAIFFYYAI), and 278–298 (YSIAYLALLFTALLVDHYFYF).

It belongs to the UbiA prenyltransferase family. Protoheme IX farnesyltransferase subfamily.

Its subcellular location is the cell inner membrane. It catalyses the reaction heme b + (2E,6E)-farnesyl diphosphate + H2O = Fe(II)-heme o + diphosphate. Its pathway is porphyrin-containing compound metabolism; heme O biosynthesis; heme O from protoheme: step 1/1. Functionally, converts heme B (protoheme IX) to heme O by substitution of the vinyl group on carbon 2 of heme B porphyrin ring with a hydroxyethyl farnesyl side group. The polypeptide is Protoheme IX farnesyltransferase (Nitrosomonas europaea (strain ATCC 19718 / CIP 103999 / KCTC 2705 / NBRC 14298)).